The sequence spans 623 residues: MMRGRSDGGLKKRLIASVCVVALFVCFLFMYYGSSSQGASALEYGRSLRKLGSSYLSGDDDNGDTKQDDSVANAEDSLVVAKSFPVCDDRHSEIIPCLDRNFIYQMRLKLDLSLMEHYERHCPPPERRFNCLIPPPSGYKVPIKWPKSRDEVWKANIPHTHLAKEKSDQNWMVEKGEKISFPGGGTHFHYGADKYIASIANMLNFSNDVLNDEGRLRTVLDVGCGVASFGAYLLASDIMTMSLAPNDVHQNQIQFALERGIPAYLGVLGTKRLPYPSRSFEFAHCSRCRIDWLQRDGLLLLELDRVLRPGGYFAYSSPEAYAQDEENLKIWKEMSALVERMCWRIAVKRNQTVVWQKPLSNDCYLEREPGTQPPLCRSDADPDAVAGVSMEACITPYSKHDHKTKGSGLAPWPARLTSSPPRLADFGYSTDMFEKDTELWKQQVDSYWNLMSSKVKSNTVRNIMDMKAHMGSFAAALKDKDVWVMNVVSPDGPNTLKLIYDRGLIGTNHNWCEAFSTYPRTYDLLHAWSIFSDIKSKGCSAEDLLIEMDRILRPTGFVIIRDKQSVVESIKKYLQALHWETVASEKVNTSSELDQDSEDGENNVVFIVQKKLWLTSESLRDSE.

At 1–13 (MMRGRSDGGLKKR) the chain is on the cytoplasmic side. A helical; Signal-anchor for type II membrane protein membrane pass occupies residues 14–34 (LIASVCVVALFVCFLFMYYGS). Topologically, residues 35-623 (SSQGASALEY…LTSESLRDSE (589 aa)) are lumenal. N-linked (GlcNAc...) asparagine glycosylation is found at Asn-204, Asn-350, and Asn-588.

The protein belongs to the methyltransferase superfamily.

It localises to the golgi apparatus membrane. This chain is Probable methyltransferase PMT8, found in Arabidopsis thaliana (Mouse-ear cress).